A 477-amino-acid chain; its full sequence is UDP-N-acetylmuramate--L-alanine ligase (477 aa).

122–128 is an ATP binding site; the sequence is GTHGKTT.

The protein belongs to the MurCDEF family.

Its subcellular location is the cytoplasm. The catalysed reaction is UDP-N-acetyl-alpha-D-muramate + L-alanine + ATP = UDP-N-acetyl-alpha-D-muramoyl-L-alanine + ADP + phosphate + H(+). It functions in the pathway cell wall biogenesis; peptidoglycan biosynthesis. Cell wall formation. This is UDP-N-acetylmuramate--L-alanine ligase from Xanthomonas euvesicatoria pv. vesicatoria (strain 85-10) (Xanthomonas campestris pv. vesicatoria).